We begin with the raw amino-acid sequence, 565 residues long: Urocanate hydratase (565 aa).

NAD(+) contacts are provided by residues Gly61 to Gly62, Gln139, Gly185 to Gly187, Glu205, Arg210, Asn251 to Ala252, Gln272 to His276, Tyr282 to Leu283, and Tyr331. The active site involves Cys419. Residues Leu453–Ser472 form a disordered region. Positions Arg463–Ser472 are enriched in basic and acidic residues. Gly501 is an NAD(+) binding site.

The protein belongs to the urocanase family. NAD(+) is required as a cofactor.

The protein resides in the cytoplasm. The enzyme catalyses 4-imidazolone-5-propanoate = trans-urocanate + H2O. It participates in amino-acid degradation; L-histidine degradation into L-glutamate; N-formimidoyl-L-glutamate from L-histidine: step 2/3. Catalyzes the conversion of urocanate to 4-imidazolone-5-propionate. The sequence is that of Urocanate hydratase from Pseudomonas syringae pv. syringae (strain B728a).